The chain runs to 81 residues: Large ribosomal subunit protein bL31B (81 aa).

It belongs to the bacterial ribosomal protein bL31 family. Type B subfamily. In terms of assembly, part of the 50S ribosomal subunit.

The polypeptide is Large ribosomal subunit protein bL31B (Bdellovibrio bacteriovorus (strain ATCC 15356 / DSM 50701 / NCIMB 9529 / HD100)).